A 431-amino-acid chain; its full sequence is UDP-N-acetylmuramate--L-alanine ligase (431 aa).

ATP is bound at residue 108–114; sequence GAHGKST.

The protein belongs to the MurCDEF family.

It is found in the cytoplasm. The catalysed reaction is UDP-N-acetyl-alpha-D-muramate + L-alanine + ATP = UDP-N-acetyl-alpha-D-muramoyl-L-alanine + ADP + phosphate + H(+). It participates in cell wall biogenesis; peptidoglycan biosynthesis. Its function is as follows. Cell wall formation. The polypeptide is UDP-N-acetylmuramate--L-alanine ligase (Campylobacter jejuni subsp. doylei (strain ATCC BAA-1458 / RM4099 / 269.97)).